The chain runs to 499 residues: Chitinase B (499 aa).

The signal sequence occupies residues 1 to 41 (MSTRKAVIGYYFIPTNQINNYTETDTSVVPFPVSNITPAKA). Residues 42 to 425 (KQLTHINFSF…AALDRYFNAA (384 aa)) enclose the GH18 domain. Residues 68 to 69 (DA) and 95 to 98 (GGWY) each bind chitin. Glutamate 144 serves as the catalytic Proton donor. Chitin-binding positions include tyrosine 145, 212-215 (MTYD), and tryptophan 403. The 61-residue stretch at 438 to 498 (LRYTGVGPGN…DSAWLKVGRL (61 aa)) folds into the Chitin-binding type-3 domain.

It belongs to the glycosyl hydrolase 18 family. Chitinase class II subfamily.

The enzyme catalyses Random endo-hydrolysis of N-acetyl-beta-D-glucosaminide (1-&gt;4)-beta-linkages in chitin and chitodextrins.. This is Chitinase B (chiB) from Serratia marcescens.